The following is an 891-amino-acid chain: Protein SEY1 homolog (891 aa).

Over 1–754 (MNLHLVDSDG…LRAAEAGNQR (754 aa)) the chain is Cytoplasmic. The GB1/RHD3-type G domain maps to 52–318 (GLNYHVVGVF…RCSDYLFSYH (267 aa)). A GTP-binding site is contributed by 62–69 (GGQSSGKS). A helical transmembrane segment spans residues 755–775 (LPAWVIPALFILGWNELLYVL). Over 776–778 (TSP) the chain is Lumenal. Residues 779–799 (ALLVLVVVICAVFFRQFFVSQ) form a helical membrane-spanning segment. Topologically, residues 800-891 (WHAFEETGPA…MRHRTTHKLD (92 aa)) are cytoplasmic. A compositionally biased stretch (polar residues) spans 863–880 (STHADPAPSNTTVPTAQA). The disordered stretch occupies residues 863-891 (STHADPAPSNTTVPTAQATMRHRTTHKLD). Basic residues predominate over residues 882–891 (MRHRTTHKLD).

It belongs to the TRAFAC class dynamin-like GTPase superfamily. GB1/RHD3 GTPase family. RHD3 subfamily.

It localises to the endoplasmic reticulum membrane. In terms of biological role, probable GTP-binding protein that may be involved in cell development. In Leishmania braziliensis, this protein is Protein SEY1 homolog.